The primary structure comprises 198 residues: RNA-free ribonuclease P (198 aa).

Belongs to the HARP family.

It carries out the reaction Endonucleolytic cleavage of RNA, removing 5'-extranucleotides from tRNA precursor.. Functionally, RNA-free RNase P that catalyzes the removal of the 5'-leader sequence from pre-tRNA to produce the mature 5'-terminus. The polypeptide is RNA-free ribonuclease P (Thermococcus kodakarensis (strain ATCC BAA-918 / JCM 12380 / KOD1) (Pyrococcus kodakaraensis (strain KOD1))).